Here is a 498-residue protein sequence, read N- to C-terminus: Glycerol kinase (498 aa).

Residue Thr-12 coordinates ADP. Thr-12, Thr-13, and Ser-14 together coordinate ATP. A sn-glycerol 3-phosphate-binding site is contributed by Thr-12. Arg-16 provides a ligand contact to ADP. 4 residues coordinate sn-glycerol 3-phosphate: Arg-82, Glu-83, Tyr-135, and Asp-245. Glycerol contacts are provided by Arg-82, Glu-83, Tyr-135, Asp-245, and Gln-246. Thr-267 and Gly-310 together coordinate ADP. Positions 267, 310, 314, and 411 each coordinate ATP. ADP is bound by residues Gly-411 and Asn-415.

It belongs to the FGGY kinase family. As to quaternary structure, homotetramer and homodimer (in equilibrium).

It catalyses the reaction glycerol + ATP = sn-glycerol 3-phosphate + ADP + H(+). Its pathway is polyol metabolism; glycerol degradation via glycerol kinase pathway; sn-glycerol 3-phosphate from glycerol: step 1/1. Activated by phosphorylation and inhibited by fructose 1,6-bisphosphate (FBP). Key enzyme in the regulation of glycerol uptake and metabolism. Catalyzes the phosphorylation of glycerol to yield sn-glycerol 3-phosphate. This Clostridium botulinum (strain Alaska E43 / Type E3) protein is Glycerol kinase.